Reading from the N-terminus, the 393-residue chain is Stimulated by retinoic acid gene 8 protein (393 aa).

A compositionally biased stretch (polar residues) spans 1–11 (MATPGEGNQPS). Positions 1–25 (MATPGEGNQPSDDGAPQPLAQLQKL) are disordered. The Nuclear localization signal (NLS) motif lies at 28–33 (RVVRRR). A coiled-coil region spans residues 66–95 (QVLNRTKIHIQEQEESLDKLLKLKASFNLQ). Residues 124–201 (FLQDSPPEWF…EEKKVDLSHS (78 aa)) are disordered. Positions 141 to 192 (DAEEEGEEEGEEEGEEGEEEEEGDEEGEEEEENGEEREVEEYQEEEEEEEEE) are enriched in acidic residues. A Nuclear export signal (NES) motif is present at residues 209–218 (LMEFERYLNF).

Interacts with XPO1. Interacts with MEIOSIN. Post-translationally, phosphorylated in P19 EC cells. Expressed exclusively in premeiotic germ cells in both sexes. In females, is expressed in the embryonic ovary. In males, is expressed in pubertal and adult testes, in premeiotic spermatogenic cells. Expressed by some type A and B spermatogonia, preleptotene spermatocytes, and early leptotene spermatocytes (at protein level). Expression begins in late undifferentiated spermatogonia and persists during differentiating spermatogonia (at protein level).

The protein resides in the cytoplasm. It is found in the nucleus. In terms of biological role, meiosis-inducer required for the transition into meiosis for both female and male germ cells. In female germ cells, acts downstream of ZGLP1 as a key effector of the meiotic program: required for premeiotic DNA replication and subsequent events in meiotic prophase. During spermatogenesis, next to its role in meiotic initiation, promotes (but is not required for) spermatogonial differentiation. In complex with MEIOSIN, directly activates the transcription of a subset of critical meiotic genes playing a central role in cell-cycle switching from mitosis to meiosis. The polypeptide is Stimulated by retinoic acid gene 8 protein (Mus musculus (Mouse)).